A 258-amino-acid chain; its full sequence is MSESRTSADGGMETSYGFREVPDGQKQGLVNQVFHKVAKRYDIMNDVMSMGMHRAWKDAMISALNPRKEPGYKVLDVAGGTGDIAFRIVEASGRQAHATVLDINGSMLGVGAERAEKKKLSGNLTFVEANAEELPFEAGSFDAYTIAFGIRNVPRIDAALSEAYRVLKRGGRLLVLEFSEVDMPLLDKIYDAWSFNAIPQFGKAITGDAEPYQYLVESIRKFPNQENFAAMIRQAGFSRVTFTNYTGGIAALHSGWKL.

The interval 1 to 21 is disordered; it reads MSESRTSADGGMETSYGFREV. S-adenosyl-L-methionine-binding positions include threonine 81, aspartate 102, and 130–131; that span reads NA.

This sequence belongs to the class I-like SAM-binding methyltransferase superfamily. MenG/UbiE family.

The catalysed reaction is a 2-demethylmenaquinol + S-adenosyl-L-methionine = a menaquinol + S-adenosyl-L-homocysteine + H(+). The enzyme catalyses a 2-methoxy-6-(all-trans-polyprenyl)benzene-1,4-diol + S-adenosyl-L-methionine = a 5-methoxy-2-methyl-3-(all-trans-polyprenyl)benzene-1,4-diol + S-adenosyl-L-homocysteine + H(+). Its pathway is quinol/quinone metabolism; menaquinone biosynthesis; menaquinol from 1,4-dihydroxy-2-naphthoate: step 2/2. It participates in cofactor biosynthesis; ubiquinone biosynthesis. In terms of biological role, methyltransferase required for the conversion of demethylmenaquinol (DMKH2) to menaquinol (MKH2) and the conversion of 2-polyprenyl-6-methoxy-1,4-benzoquinol (DDMQH2) to 2-polyprenyl-3-methyl-6-methoxy-1,4-benzoquinol (DMQH2). In Rhizobium johnstonii (strain DSM 114642 / LMG 32736 / 3841) (Rhizobium leguminosarum bv. viciae), this protein is Ubiquinone/menaquinone biosynthesis C-methyltransferase UbiE.